We begin with the raw amino-acid sequence, 80 residues long: Toxin TdNa1 (80 aa).

Positions 1–20 (MKGIILFISCLMLIDVVVES) are cleaved as a signal peptide. Positions 21–79 (RDAYPADWRGCKFSCFWGSSSWCNEECTSLGGSSGYCAWPACWCYGLPDSVRYYNNKCH) constitute an LCN-type CS-alpha/beta domain. Intrachain disulfides connect cysteine 31-cysteine 78, cysteine 35-cysteine 57, cysteine 43-cysteine 62, and cysteine 47-cysteine 64.

This sequence belongs to the long (4 C-C) scorpion toxin superfamily. Sodium channel inhibitor family. Beta subfamily. In terms of tissue distribution, expressed by the venom gland.

It is found in the secreted. Inhibits the sodium (Nav) currents in an apparent irreversible manner. Produces small depolarization and induces repetitive firing in squid axons. Is specific for arthropods (crickets, triatomides, crabs and squids), but is non-toxic to mice. The sequence is that of Toxin TdNa1 from Tityus discrepans (Venezuelan scorpion).